Reading from the N-terminus, the 179-residue chain is Large ribosomal subunit protein uL6 (179 aa).

It belongs to the universal ribosomal protein uL6 family. Part of the 50S ribosomal subunit.

Its function is as follows. This protein binds to the 23S rRNA, and is important in its secondary structure. It is located near the subunit interface in the base of the L7/L12 stalk, and near the tRNA binding site of the peptidyltransferase center. This Chlorobium limicola (strain DSM 245 / NBRC 103803 / 6330) protein is Large ribosomal subunit protein uL6.